The following is a 51-amino-acid chain: Small polypeptide DEVIL 1 (51 aa).

Residues 1-25 form a disordered region; the sequence is MEMKRVMMSSAERSKEKKRSISRRL. Residues 16-25 are compositionally biased toward basic residues; sequence EKKRSISRRL. The segment at 20-51 is required for DVL/RTFL small polypeptide activity; the sequence is SISRRLGKYMKEQKGRIYIIRRCMVMLLCSHD. A helical membrane pass occupies residues 28-44; sequence YMKEQKGRIYIIRRCMV.

The protein belongs to the DVL/RTFL small polypeptides family. In terms of tissue distribution, mostly expressed in leaves and, to a lower extent, in roots and stems.

Its subcellular location is the cell membrane. In terms of biological role, small polypeptide acting as a regulatory molecule which coordinates cellular responses required for differentiation, growth and development, including leaves shape, pedicule elongation, inflorescence organization and fruit maturation, probably by restricting polar cell proliferation in lateral organs and coordinating socket cell recruitment and differentiation at trichome sites. The protein is Small polypeptide DEVIL 1 of Arabidopsis thaliana (Mouse-ear cress).